The sequence spans 443 residues: Endothelin receptor type B (443 aa).

The signal sequence occupies residues 1 to 26 (MQPLPTLCGRVLVALILACGVAGVQG). Residues 27–102 (EERRFPPARA…RTIEIKETFK (76 aa)) are Extracellular-facing. The segment covering 51-62 (TKTSWPTGSNAS) has biased composition (polar residues). The disordered stretch occupies residues 51–89 (TKTSWPTGSNASVPRLSAPPQMPKAGRTAGAQRRTLPPP). N60 is a glycosylation site (N-linked (GlcNAc...) asparagine). A helical membrane pass occupies residues 103–127 (YINTVVSCLVFVLGIIGNSTLLRII). The Cytoplasmic segment spans residues 128 to 138 (YKNKCMRNGPN). The helical transmembrane segment at 139–164 (ILIASLALGDLLHIIIDIPINVYKLL) threads the bilayer. At 165–176 (AEDWPFGVEMCK) the chain is on the extracellular side. A disulfide bond links C175 and C256. Residues 177–198 (LVPFIQKASVGITVLSLCALSI) traverse the membrane as a helical segment. At 199 to 219 (DRYRAVASWSRIKGIGVPKWT) the chain is on the cytoplasmic side. A helical transmembrane segment spans residues 220–244 (AVEIVLIWVVSVVLAVPEAVGFDMI). Residues 245-272 (TADYKGSYLRICLLHPTQKTAFMQFYKN) are Extracellular-facing. The helical transmembrane segment at 273-297 (AKDWWLFSFYFCLPLAITAFFYTLE) threads the bilayer. Residues 298–325 (TCEMLRKKSGMQIALNDHLKQRREVAKT) lie on the Cytoplasmic side of the membrane. S306 is modified (phosphoserine). Residues 326 to 351 (VFCLVLVFALCWLPLHLSRILKHTLY) traverse the membrane as a helical segment. Residues 352–363 (DQNDPHRCELLS) are Extracellular-facing. A helical membrane pass occupies residues 364–390 (FLLVLEYIGINMASLNSCINPIALYLV). The Cytoplasmic segment spans residues 391–443 (SKRFKNCFKWCLCCWCQSFEEKQSLEDKQSCLKFKANDHGYDNFRSSNKYSSS). 3 S-palmitoyl cysteine lipidation sites follow: C403, C404, and C406. The residue at position 420 (S420) is a Phosphoserine. Phosphotyrosine is present on Y440. S441, S442, and S443 each carry phosphoserine.

This sequence belongs to the G-protein coupled receptor 1 family. Endothelin receptor subfamily. EDNRB sub-subfamily.

The protein resides in the cell membrane. Its function is as follows. Non-specific receptor for endothelin 1, 2, and 3. Mediates its action by association with G proteins that activate a phosphatidylinositol-calcium second messenger system. The sequence is that of Endothelin receptor type B (EDNRB) from Equus caballus (Horse).